A 375-amino-acid polypeptide reads, in one-letter code: Chaperone protein DnaJ (375 aa).

Residues 5-70 enclose the J domain; that stretch reads DYYEVLGVAR…NKRRAYDAHG (66 aa). Residues 131–208 form a CR-type zinc finger; it reads GIERRIEIPT…CHGAGRVEED (78 aa). The Zn(2+) site is built by Cys144, Cys147, Cys160, Cys163, Cys182, Cys185, Cys196, and Cys199. CXXCXGXG motif repeat units follow at residues 144–151, 160–167, 182–189, and 196–203; these read CAPCHGSG, CGTCHGRG, CPHCDGRG, and CKTCHGAG.

Belongs to the DnaJ family. In terms of assembly, homodimer. Zn(2+) serves as cofactor.

Its subcellular location is the cytoplasm. Participates actively in the response to hyperosmotic and heat shock by preventing the aggregation of stress-denatured proteins and by disaggregating proteins, also in an autonomous, DnaK-independent fashion. Unfolded proteins bind initially to DnaJ; upon interaction with the DnaJ-bound protein, DnaK hydrolyzes its bound ATP, resulting in the formation of a stable complex. GrpE releases ADP from DnaK; ATP binding to DnaK triggers the release of the substrate protein, thus completing the reaction cycle. Several rounds of ATP-dependent interactions between DnaJ, DnaK and GrpE are required for fully efficient folding. Also involved, together with DnaK and GrpE, in the DNA replication of plasmids through activation of initiation proteins. This Xanthomonas axonopodis pv. citri (strain 306) protein is Chaperone protein DnaJ.